Consider the following 180-residue polypeptide: UPF0227 protein Spro_1925 (180 aa).

This sequence belongs to the UPF0227 family.

In Serratia proteamaculans (strain 568), this protein is UPF0227 protein Spro_1925.